The primary structure comprises 546 residues: MEGTMRCSANYVPLSPISFLERAAVVFGSRTSVVYGDIQYTWHQTRDRCVRLASALSDLGLSRHDVVAALAPNVPALCELYFGAPMAGAVLCVLNTTFDSQMLAMALEKTKPKVFFVDSEFLSVAEESLSLLSNIEEKPLIITITENPTEQSKYEQYEDFLSTGNPNFKPIRPVDECDPIALNFTSGTTSTPKCVVYSHRGAYLNATAVGVMNEMKPMPVYLCTVPMYHCSGWCYIWTVTAFGGVIVCLREVNDEVIFDSIVKHKVTNFGGSPPVLNMIANARDSVKKSFPWTVQVMSGGSSPPEVMLKLKKLGFKVMMAYGCSEVYGLGTACLWMPEWETLPEEESLRLKARDGLNHFAKEAVDVLDPTTMKSVPHDGKTIRVIALRGNTVMSGYFKDKEATEAAFRGGWYWSRDMGVIDPDGYIQFKDRSQDVITCGGEIVGSKEIEGILYSHPAVYDAGVVGRPDETLGESMCAFVKLKEGAEAREEEIIEFCKRKLGNKNMKMIPKTVVFSDVPKTPTGKIRKNVLRKMAKDMGYVQLRAVE.

Belongs to the ATP-dependent AMP-binding enzyme family.

Its function is as follows. May act as an acid--thiol ligase that activates carboxylic acids by forming acyl-CoAs. The sequence is that of Probable acyl-activating enzyme 21 (AEE21) from Arabidopsis thaliana (Mouse-ear cress).